The primary structure comprises 89 residues: Small ribosomal subunit protein uS15 (89 aa).

The protein belongs to the universal ribosomal protein uS15 family. In terms of assembly, part of the 30S ribosomal subunit. Forms a bridge to the 50S subunit in the 70S ribosome, contacting the 23S rRNA.

In terms of biological role, one of the primary rRNA binding proteins, it binds directly to 16S rRNA where it helps nucleate assembly of the platform of the 30S subunit by binding and bridging several RNA helices of the 16S rRNA. Its function is as follows. Forms an intersubunit bridge (bridge B4) with the 23S rRNA of the 50S subunit in the ribosome. The protein is Small ribosomal subunit protein uS15 of Pelodictyon phaeoclathratiforme (strain DSM 5477 / BU-1).